We begin with the raw amino-acid sequence, 939 residues long: Trafficking kinesin-binding protein 1 (939 aa).

Positions 46–353 (LEEQLPHYKL…EELKNLRNKT (308 aa)) constitute an HAP1 N-terminal domain. A coiled-coil region spans residues 106-354 (KTYNDIDAVT…ELKNLRNKTM (249 aa)). The segment at 359–509 (RYHSLGLFPM…SLRRENYLSE (151 aa)) is interaction with HGS. O-linked (GlcNAc) serine glycosylation is present at Ser-444. Residues 472–492 (LGNEDHNKKPGTPGTPGSHDL) are disordered. A coiled-coil region spans residues 490 to 524 (HDLETALRRLSLRRENYLSERRFFEEEQERKLREL). Ser-534 carries the phosphoserine modification. Residues 655-669 (PGKCMSQTNSTFTFT) form an interaction with OGT region. Ser-677 and Ser-716 each carry an O-linked (GlcNAc) serine glycan. Phosphoserine occurs at positions 716 and 905.

The protein belongs to the milton family. As to quaternary structure, interacts with RHOT1 and RHOT2. Found in a complex with KIF5B, OGT, RHOT1 and RHOT2. Interacts with HGS. Interacts with GABRA1. Interacts with KIF5C. Interacts with OGT; stable interaction is not required for glycosylation of this protein by OGT. Isoform 1 interacts with OGT. O-glycosylated. Glycosylated by OGT; glycosylation in response to increased extracellular glucose levels is required for and leads to regulation of mitochondrial motility by OGT. Widely expressed with the greatest expression in brain, liver and kidney. Detected throughout the CNS, including the cortex, hippocamps, thalamus and various subcortical nuclei of the forebrain and midbrain, the granule of Purkinje layers of the cerebellum and the gray matter of the spinal cord. High level detected in lower moter neurons (at protein level).

Its subcellular location is the cytoplasm. The protein resides in the nucleus. It is found in the mitochondrion. The protein localises to the early endosome. It localises to the endosome. Its subcellular location is the mitochondrion membrane. The protein resides in the cell cortex. In terms of biological role, involved in the regulation of endosome-to-lysosome trafficking, including endocytic trafficking of EGF-EGFR complexes and GABA-A receptors. Involved in mitochondrial motility. When O-glycosylated, abolishes mitochondrial motility. Crucial for recruiting OGT to the mitochondrial surface of neuronal processes. TRAK1 and RHOT form an essential protein complex that links KIF5 to mitochondria for light chain-independent, anterograde transport of mitochondria. The polypeptide is Trafficking kinesin-binding protein 1 (Trak1) (Mus musculus (Mouse)).